The following is a 397-amino-acid chain: Acetate kinase (397 aa).

Asparagine 7 is a Mg(2+) binding site. ATP is bound at residue lysine 14. Residue arginine 90 coordinates substrate. Aspartate 147 acts as the Proton donor/acceptor in catalysis. Residues 207 to 211 (HLGNG), 282 to 284 (DFR), and 330 to 334 (GLGEN) each bind ATP. A Mg(2+)-binding site is contributed by glutamate 383.

It belongs to the acetokinase family. In terms of assembly, homodimer. Mg(2+) serves as cofactor. The cofactor is Mn(2+).

The protein localises to the cytoplasm. It catalyses the reaction acetate + ATP = acetyl phosphate + ADP. It participates in metabolic intermediate biosynthesis; acetyl-CoA biosynthesis; acetyl-CoA from acetate: step 1/2. Functionally, catalyzes the formation of acetyl phosphate from acetate and ATP. Can also catalyze the reverse reaction. The polypeptide is Acetate kinase (Clostridium botulinum (strain Langeland / NCTC 10281 / Type F)).